The chain runs to 334 residues: Transmembrane protein 41 homolog (334 aa).

The N-linked (GlcNAc...) asparagine glycan is linked to Asn43. The disordered stretch occupies residues 47 to 79 (KNKNNNIDNKKNSNNNNNNNNNNNNKNSISNNN). A glycan (N-linked (GlcNAc...) asparagine) is linked at Asn83. Helical transmembrane passes span 97–117 (LPLW…VFLF), 156–176 (FIVI…SIPG), 192–214 (VGFP…ISYY), 246–266 (IVFL…ASPL), 269–289 (VPIH…TFLA), and 305–325 (IFDL…ILPT).

This sequence belongs to the TMEM41 family.

Its subcellular location is the membrane. The sequence is that of Transmembrane protein 41 homolog from Dictyostelium discoideum (Social amoeba).